The sequence spans 445 residues: Histidinol dehydrogenase (445 aa).

Positions 144, 205, and 228 each coordinate NAD(+). Residues serine 251, glutamine 273, and histidine 276 each coordinate substrate. Residues glutamine 273 and histidine 276 each coordinate Zn(2+). Residues glutamate 341 and histidine 342 each act as proton acceptor in the active site. Histidine 342, aspartate 375, glutamate 429, and histidine 434 together coordinate substrate. Position 375 (aspartate 375) interacts with Zn(2+). Residue histidine 434 coordinates Zn(2+).

It belongs to the histidinol dehydrogenase family. The cofactor is Zn(2+).

It carries out the reaction L-histidinol + 2 NAD(+) + H2O = L-histidine + 2 NADH + 3 H(+). It participates in amino-acid biosynthesis; L-histidine biosynthesis; L-histidine from 5-phospho-alpha-D-ribose 1-diphosphate: step 9/9. Its function is as follows. Catalyzes the sequential NAD-dependent oxidations of L-histidinol to L-histidinaldehyde and then to L-histidine. This Cupriavidus pinatubonensis (strain JMP 134 / LMG 1197) (Cupriavidus necator (strain JMP 134)) protein is Histidinol dehydrogenase.